A 1658-amino-acid polypeptide reads, in one-letter code: Silent chromatin protein ESC1 (1658 aa).

Residues 36 to 54 (DSKMKDQHGYSRVHNDKYR) are compositionally biased toward basic and acidic residues. Disordered stretches follow at residues 36-76 (DSKM…SSHI) and 156-499 (TSFQ…LENE). 2 stretches are compositionally biased toward acidic residues: residues 205 to 214 (LENDEYELSE) and 245 to 254 (SNDEYAEEEG). The span at 262 to 286 (GQEQANVENATQISSSDSSEGQNYS) shows a compositional bias: polar residues. Residues 289–305 (VEMELEDDIDVESDAEK) show a composition bias toward acidic residues. Residues 335–352 (VIEKYESDEHKVHQRYSE) are compositionally biased toward basic and acidic residues. Over residues 365-375 (VDDESEDEESQ) the composition is skewed to acidic residues. Basic and acidic residues predominate over residues 386 to 397 (VYHHNEHELDDK). Acidic residues predominate over residues 398–407 (ELIEDIESSD). Positions 408-417 (SESQSAQESE) are enriched in low complexity. Basic and acidic residues-rich tracts occupy residues 425–435 (EYKMKNEKSTS), 442–461 (SESR…KVEQ), and 471–482 (DDIIRSSLDKNF). Threonine 500 is subject to Phosphothreonine. Serine 532 bears the Phosphoserine mark. Disordered stretches follow at residues 550–584 (SRNS…DESE) and 589–608 (LKDF…GDLS). The span at 568–577 (GHSNGSNLSG) shows a compositional bias: polar residues. Phosphoserine occurs at positions 579, 583, 608, and 662. 3 disordered regions span residues 770-819 (SKET…EDNT), 863-964 (EMSS…VKGT), and 1082-1115 (ENNT…GSAK). Residues 800 to 812 (QSKNFPGVANSTD) show a composition bias toward polar residues. Serine 865 and serine 866 each carry phosphoserine. The segment covering 869 to 878 (ECVKQNDDGS) has biased composition (basic and acidic residues). Positions 879–905 (KTQISFSTDSPDNFQESNDNTEFSSTK) are enriched in polar residues. A phosphoserine mark is found at serine 888 and serine 911. Over residues 918 to 931 (SLKKELTKAEVVDK) the composition is skewed to basic and acidic residues. The span at 932-956 (LDEEESEDSYEQDYADPEPGNDEGS) shows a compositional bias: acidic residues. A phosphoserine mark is found at serine 937, serine 1092, serine 1096, serine 1098, serine 1166, serine 1176, and serine 1178. The span at 1082–1096 (ENNTNMHDQVSQACS) shows a compositional bias: polar residues. Residues 1097–1115 (DSDRDQDSTAEKNVEGSAK) are compositionally biased toward basic and acidic residues. The segment covering 1197 to 1207 (STDASVNMKSV) has biased composition (polar residues). The disordered stretch occupies residues 1197–1216 (STDASVNMKSVSSKERDSDE). 2 positions are modified to phosphoserine: serine 1214 and serine 1254. The segment covering 1261-1272 (VKDKENLHKSEE) has biased composition (basic and acidic residues). The interval 1261-1315 (VKDKENLHKSEEPLVEGLQSEQHFEKKDHSENEEEFDTIYGDITSANIHSNAPDD) is disordered. Residues serine 1290, serine 1326, and serine 1332 each carry the phosphoserine modification. Disordered regions lie at residues 1334–1482 (RLIE…TSPE) and 1503–1658 (PATT…SVDK). Positions 1335–1366 (LIEDSRRGKNQEESDEVNTSRERDLTFEKSVN) are enriched in basic and acidic residues. Residues serine 1403, serine 1409, serine 1450, and serine 1454 each carry the phosphoserine modification. Over residues 1407–1423 (LNSEPEEAELYELEIEG) the composition is skewed to acidic residues. A compositionally biased stretch (polar residues) spans 1463–1479 (YPYSNSENITAEKSAPT). Positions 1507 to 1537 (LEKHDKTNVTSVLDDRSEHLSSHDVDNEPHD) are enriched in basic and acidic residues. Serine 1539 carries the phosphoserine modification. 2 stretches are compositionally biased toward basic and acidic residues: residues 1550–1564 (PEHQ…VEVK) and 1575–1591 (VLEE…DKSS). 2 positions are modified to phosphoserine: serine 1590 and serine 1591. The segment covering 1607–1626 (TKAKKKSRKRNYNSRRRKRK) has biased composition (basic residues). Over residues 1648-1658 (RGQNTHPSVDK) the composition is skewed to polar residues.

As to quaternary structure, interacts with SIR4.

The protein resides in the nucleus. Functionally, involved in the clustering of telomeres at the nuclear periphery, forming discrete subcompartments that accumulate a complex of histone-binding silencing factors like SIR4. Required for SIR4-mediated anchoring and partitioning of plasmids. The polypeptide is Silent chromatin protein ESC1 (ESC1) (Saccharomyces cerevisiae (strain ATCC 204508 / S288c) (Baker's yeast)).